Here is a 260-residue protein sequence, read N- to C-terminus: Ribosomal RNA small subunit methyltransferase J (260 aa).

Residues Arg101 to Asp102, Glu117 to Arg118, Ser153 to Ser154, and Asp176 each bind S-adenosyl-L-methionine.

It belongs to the methyltransferase superfamily. RsmJ family.

Its subcellular location is the cytoplasm. The enzyme catalyses guanosine(1516) in 16S rRNA + S-adenosyl-L-methionine = N(2)-methylguanosine(1516) in 16S rRNA + S-adenosyl-L-homocysteine + H(+). Its function is as follows. Specifically methylates the guanosine in position 1516 of 16S rRNA. The chain is Ribosomal RNA small subunit methyltransferase J from Aliivibrio salmonicida (strain LFI1238) (Vibrio salmonicida (strain LFI1238)).